The following is a 5207-amino-acid chain: E3 ubiquitin-protein ligase RNF213 (5207 aa).

Disordered stretches follow at residues 1–20 (MECP…FCSQ) and 27–365 (PAAP…EADV). Residues 34–43 (SENNNSTMAS) show a composition bias toward polar residues. A compositionally biased stretch (basic residues) spans 89–100 (KKKKRKKKKKGN). 2 stretches are compositionally biased toward low complexity: residues 101–117 (KSAS…PASP) and 136–157 (SQAQ…ATTP). Residues 188–197 (SEAQSSPQFQ) are compositionally biased toward polar residues. Phosphoserine occurs at positions 208 and 217. Residues 248–266 (GGSSEPGTELQTTEQQAGA) are compositionally biased toward polar residues. Basic and acidic residues-rich tracts occupy residues 285-294 (AGKEMKEKTQ), 309-346 (HCQE…EGKN), and 353-362 (KNEKEQKNQE). Residues 343–374 (EGKNRSAAAVKNEKEQKNQEADVQEVKASTLS) are a coiled coil. Lysine 1151 participates in a covalent cross-link: Glycyl lysine isopeptide (Lys-Gly) (interchain with G-Cter in SUMO2). At serine 1258 the chain carries Phosphoserine. ATP is bound by residues 1995 to 2000 (GVGKSL), glutamate 2098, aspartate 2155, and arginine 2216. Position 2273 is a phosphoserine (serine 2273). Residues lysine 2499 and serine 2574 each contribute to the ATP site. Zn(2+) is bound by residues cysteine 3997, cysteine 4000, cysteine 4012, histidine 4014, cysteine 4017, cysteine 4020, cysteine 4032, cysteine 4035, cysteine 4505, and histidine 4509. The RING-type zinc-finger motif lies at 3997–4036 (CSICLGDAKDPVCLPCDHVHCLRCLRAWFASEQMICPYCL). An RZ-type zinc finger spans residues 4483–4555 (MPEDLLAQAR…VKDKADRTQT (73 aa)). Cysteine 4516 (nucleophile; for E3 ubiquitin-lipopolysaccharide ligase activity) is an active-site residue. Residues cysteine 4525 and cysteine 4528 each coordinate Zn(2+).

Belongs to the AAA ATPase family. As to quaternary structure, monomer. Interacts with UBE2L3/UBCH7; UBE2L3/UBCH7 is the most efficient ubiquitin-conjugating enzyme E2 for the ubiquitin ligase activity. Interacts with UBE2N/UBC13; promoting 'Lys-63'-linked ubiquitination of target proteins. In terms of assembly, (Microbial infection) Interacts with M.tuberculosis protein Rv3655c, which impairs caspase-8 activation and suppresses macrophage apoptosis by blocking the extrinsic pathway. Autoubiquitinated. Widely expressed (at protein level). In terms of tissue distribution, major isoform detected in all tissues examined. As to expression, minor isoform with restricted expression.

It localises to the cytoplasm. The protein localises to the cytosol. It is found in the lipid droplet. It catalyses the reaction S-ubiquitinyl-[E2 ubiquitin-conjugating enzyme]-L-cysteine + [acceptor protein]-L-lysine = [E2 ubiquitin-conjugating enzyme]-L-cysteine + N(6)-ubiquitinyl-[acceptor protein]-L-lysine.. It carries out the reaction ATP + H2O = ADP + phosphate + H(+). Its pathway is protein modification; protein ubiquitination. Its function is as follows. Atypical E3 ubiquitin ligase that can catalyze ubiquitination of both proteins and lipids, and which is involved in various processes, such as lipid metabolism, angiogenesis and cell-autonomous immunity. Acts as a key immune sensor by catalyzing ubiquitination of the lipid A moiety of bacterial lipopolysaccharide (LPS) via its RZ-type zinc-finger: restricts the proliferation of cytosolic bacteria, such as Salmonella, by generating the bacterial ubiquitin coat through the ubiquitination of LPS. Also acts indirectly by mediating the recruitment of the LUBAC complex, which conjugates linear polyubiquitin chains. Ubiquitination of LPS triggers cell-autonomous immunity, such as antibacterial autophagy, leading to degradation of the microbial invader. Involved in lipid metabolism by regulating fat storage and lipid droplet formation; act by inhibiting the lipolytic process. Also regulates lipotoxicity by inhibiting desaturation of fatty acids. Also acts as an E3 ubiquitin-protein ligase via its RING-type zinc finger: mediates 'Lys-63'-linked ubiquitination of target proteins. Involved in the non-canonical Wnt signaling pathway in vascular development: acts by mediating ubiquitination and degradation of FLNA and NFATC2 downstream of RSPO3, leading to inhibit the non-canonical Wnt signaling pathway and promoting vessel regression. Also has ATPase activity; ATPase activity is required for ubiquitination of LPS. The sequence is that of E3 ubiquitin-protein ligase RNF213 from Homo sapiens (Human).